We begin with the raw amino-acid sequence, 139 residues long: Large ribosomal subunit protein uL16 (139 aa).

Belongs to the universal ribosomal protein uL16 family. In terms of assembly, part of the 50S ribosomal subunit.

In terms of biological role, binds 23S rRNA and is also seen to make contacts with the A and possibly P site tRNAs. The polypeptide is Large ribosomal subunit protein uL16 (Microcystis aeruginosa (strain NIES-843 / IAM M-2473)).